The following is a 393-amino-acid chain: uncharacterized protein (393 aa).

This is an uncharacterized protein from Treponema pallidum (strain Nichols).